A 192-amino-acid chain; its full sequence is Erythropoietin (192 aa).

Positions 1–26 (MGVPERPTLLLLLSLLLLPLGLPVLC) are cleaved as a signal peptide. Cysteine 33 and cysteine 187 are joined by a disulfide. Residues asparagine 50, asparagine 64, and asparagine 109 are each glycosylated (N-linked (GlcNAc...) asparagine).

Belongs to the EPO/TPO family. In terms of tissue distribution, produced by kidney or liver of adult mammals and by liver of fetal or neonatal mammals.

It is found in the secreted. In terms of biological role, hormone involved in the regulation of erythrocyte proliferation and differentiation and the maintenance of a physiological level of circulating erythrocyte mass. Binds to EPOR leading to EPOR dimerization and JAK2 activation thereby activating specific downstream effectors, including STAT1 and STAT3. This Alexandromys oeconomus (Tundra vole) protein is Erythropoietin (EPO).